The chain runs to 256 residues: Major prion protein (256 aa).

Residues 1 to 24 form the signal peptide; sequence MVKSHIGSWILVLFVAMWSDVGLC. The interaction with GRB2, ERI3 and SYN1 stretch occupies residues 25 to 233; that stretch reads KKRPKPGGGW…ESQAYYQRGA (209 aa). Residues 28-110 are disordered; it reads PKPGGGWNTG…QWNKPSKPKT (83 aa). A run of 5 repeats spans residues 54–62, 63–70, 71–78, 79–86, and 87–95. The tract at residues 54–95 is 5 X 8 AA tandem repeats of P-H-G-G-G-W-G-Q; the sequence is PQGAGGWGQPHGGGWGQPHGGGWGQPHGGGWGQPHGGGGWGQ. Positions 56–97 are enriched in gly residues; it reads GAGGWGQPHGGGWGQPHGGGWGQPHGGGWGQPHGGGGWGQGG. Positions 64, 65, 66, 72, 73, 74, 80, 81, 82, 88, 90, and 91 each coordinate Cu(2+). A disulfide bridge connects residues Cys-182 and Cys-217. Residues Asn-184 and Asn-200 are each glycosylated (N-linked (GlcNAc...) asparagine). Ala-233 carries GPI-anchor amidated alanine lipidation. Positions 234–256 are cleaved as a propeptide — removed in mature form; the sequence is SVILFSSPPVILLISFLIFLIVG.

This sequence belongs to the prion family. In terms of assembly, monomer and homodimer. Has a tendency to aggregate into amyloid fibrils containing a cross-beta spine, formed by a steric zipper of superposed beta-strands. Soluble oligomers may represent an intermediate stage on the path to fibril formation. Copper binding may promote oligomerization. Interacts with GRB2, APP, ERI3/PRNPIP and SYN1. Mislocalized cytosolically exposed PrP interacts with MGRN1; this interaction alters MGRN1 subcellular location and causes lysosomal enlargement. Interacts with KIAA1191.

It localises to the cell membrane. It is found in the golgi apparatus. Functionally, its primary physiological function is unclear. Has cytoprotective activity against internal or environmental stresses. May play a role in neuronal development and synaptic plasticity. May be required for neuronal myelin sheath maintenance. May play a role in iron uptake and iron homeostasis. Soluble oligomers are toxic to cultured neuroblastoma cells and induce apoptosis (in vitro). Association with GPC1 (via its heparan sulfate chains) targets PRNP to lipid rafts. Also provides Cu(2+) or Zn(2+) for the ascorbate-mediated GPC1 deaminase degradation of its heparan sulfate side chains. This Moschus chrysogaster (Alpine musk deer) protein is Major prion protein (PRNP).